The following is a 383-amino-acid chain: Paralemmin-1 (383 aa).

Methionine 1 is subject to N-acetylmethionine. A coiled-coil region spans residues 7 to 101 (DTVSQQERLQ…EKEIDVLEFG (95 aa)). 3 disordered regions span residues 51–164 (RERW…STMM), 242–293 (TLSE…QPGQ), and 333–374 (SVTP…DMKK). Residues 69 to 96 (DMRKQMQEDEQKARSLEESITRLEKEID) show a composition bias toward basic and acidic residues. Residues serine 116, serine 122, and serine 124 each carry the phosphoserine modification. Over residues 133–143 (ETMVNAQQTPL) the composition is skewed to polar residues. Phosphothreonine is present on residues threonine 141, threonine 145, and threonine 153. A phosphoserine mark is found at serine 157 and serine 161. Position 242 is a phosphothreonine (threonine 242). Phosphoserine is present on serine 244. Residues 257 to 273 (GLAEDVTRTTPSRREIT) are compositionally biased toward basic and acidic residues. Serine 345 carries the phosphoserine modification. Residues 357–367 (QTGPTTTPSDT) are compositionally biased toward polar residues. Phosphothreonine occurs at positions 361, 362, and 363. Residue serine 365 is modified to Phosphoserine. Threonine 367 carries the post-translational modification Phosphothreonine. Residues cysteine 377 and cysteine 379 are each lipidated (S-palmitoyl cysteine). Cysteine 380 carries the post-translational modification Cysteine methyl ester. Cysteine 380 carries S-farnesyl cysteine lipidation. The propeptide at 381–383 (SVM) is removed in mature form.

This sequence belongs to the paralemmin family. As to quaternary structure, interacts with dopamine receptor DRD3. As to expression, expressed in neurons cells of neuropil-rich areas of the brain, in the Purkinje cells of the cerebellum, in cells of the cerebral cortex, hippocampus, brainstem nuclei and glial processes and sheaths. Expressed in the medulla of the adrenal chromaffin cells and renal duct cells (at protein level).

The protein localises to the cell membrane. Its subcellular location is the cell projection. The protein resides in the filopodium membrane. It is found in the axon. It localises to the dendrite. The protein localises to the dendritic spine. Its subcellular location is the basolateral cell membrane. The protein resides in the apicolateral cell membrane. Involved in plasma membrane dynamics and cell process formation. Necessary for axonal and dendritic filopodia induction, for dendritic spine maturation and synapse formation in a palmitoylation-dependent manner. This Rattus norvegicus (Rat) protein is Paralemmin-1 (Palm).